A 348-amino-acid polypeptide reads, in one-letter code: Dihydroorotase (348 aa).

His17 and His19 together coordinate Zn(2+). Substrate contacts are provided by residues 19 to 21 (HLR) and Asn45. Lys103, His140, and His178 together coordinate Zn(2+). An N6-carboxylysine modification is found at Lys103. Position 140 (His140) interacts with substrate. Leu223 contacts substrate. Residue Asp251 coordinates Zn(2+). The active site involves Asp251. Residues His255 and Ala267 each contribute to the substrate site.

It belongs to the metallo-dependent hydrolases superfamily. DHOase family. Class II DHOase subfamily. As to quaternary structure, homodimer. Zn(2+) serves as cofactor.

It catalyses the reaction (S)-dihydroorotate + H2O = N-carbamoyl-L-aspartate + H(+). It functions in the pathway pyrimidine metabolism; UMP biosynthesis via de novo pathway; (S)-dihydroorotate from bicarbonate: step 3/3. Functionally, catalyzes the reversible cyclization of carbamoyl aspartate to dihydroorotate. In Serratia proteamaculans (strain 568), this protein is Dihydroorotase.